We begin with the raw amino-acid sequence, 98 residues long: NADH-ubiquinone oxidoreductase chain 4L (98 aa).

3 helical membrane passes run serine 2–phenylalanine 22, leucine 26–isoleucine 46, and isoleucine 59–alanine 79.

Belongs to the complex I subunit 4L family. Core subunit of respiratory chain NADH dehydrogenase (Complex I) which is composed of 45 different subunits.

It localises to the mitochondrion inner membrane. The catalysed reaction is a ubiquinone + NADH + 5 H(+)(in) = a ubiquinol + NAD(+) + 4 H(+)(out). Its function is as follows. Core subunit of the mitochondrial membrane respiratory chain NADH dehydrogenase (Complex I) which catalyzes electron transfer from NADH through the respiratory chain, using ubiquinone as an electron acceptor. Part of the enzyme membrane arm which is embedded in the lipid bilayer and involved in proton translocation. The polypeptide is NADH-ubiquinone oxidoreductase chain 4L (MT-ND4L) (Alexandromys kikuchii (Taiwan vole)).